The chain runs to 301 residues: tRNA pseudouridine synthase B (301 aa).

The Nucleophile role is filled by Asp-38.

It belongs to the pseudouridine synthase TruB family. Type 1 subfamily.

The enzyme catalyses uridine(55) in tRNA = pseudouridine(55) in tRNA. Responsible for synthesis of pseudouridine from uracil-55 in the psi GC loop of transfer RNAs. The protein is tRNA pseudouridine synthase B of Ehrlichia canis (strain Jake).